The following is a 1846-amino-acid chain: C2 domain-containing protein (1846 aa).

A disordered region spans residues 16–36 (NTEKEEGKNAEINENNDPNTQ). The segment covering 17–26 (TEKEEGKNAE) has biased composition (basic and acidic residues). Residues 27–36 (INENNDPNTQ) show a composition bias toward polar residues. Residues 497–623 (VPRYRQRGDI…FNEKNVRRNK (127 aa)) form the C2 domain. Composition is skewed to basic and acidic residues over residues 1193 to 1211 (DEHT…DNYK) and 1230 to 1243 (KDDH…KVSK). Disordered stretches follow at residues 1193–1244 (DEHT…VSKS), 1346–1370 (KYTI…KKQD), 1456–1635 (KNER…KKRV), 1652–1692 (NEKM…NNER), and 1827–1846 (EEPS…VRKN). Residues 1349–1506 (INEKRDDIKT…DENMKEEQKM (158 aa)) are a coiled coil. Composition is skewed to basic and acidic residues over residues 1456–1474 (KNER…QKDK), 1481–1629 (ESRD…MRRE), 1652–1663 (NEKMKKKEEKEE), and 1670–1692 (KEDI…NNER). The segment covering 1834–1846 (SPQKKKIVIVRKN) has biased composition (basic residues).

It is found in the membrane. In terms of biological role, binds calcium and phospholipids. Regulates microneme secretion. The sequence is that of C2 domain-containing protein from Plasmodium falciparum (isolate 3D7).